Consider the following 235-residue polypeptide: Phosphoribosylaminoimidazole-succinocarboxamide synthase (235 aa).

This sequence belongs to the SAICAR synthetase family.

It catalyses the reaction 5-amino-1-(5-phospho-D-ribosyl)imidazole-4-carboxylate + L-aspartate + ATP = (2S)-2-[5-amino-1-(5-phospho-beta-D-ribosyl)imidazole-4-carboxamido]succinate + ADP + phosphate + 2 H(+). It participates in purine metabolism; IMP biosynthesis via de novo pathway; 5-amino-1-(5-phospho-D-ribosyl)imidazole-4-carboxamide from 5-amino-1-(5-phospho-D-ribosyl)imidazole-4-carboxylate: step 1/2. This chain is Phosphoribosylaminoimidazole-succinocarboxamide synthase, found in Streptococcus pneumoniae (strain JJA).